Reading from the N-terminus, the 760-residue chain is Molybdenum cofactor sulfurase 2 (760 aa).

Position 223 is an N6-(pyridoxal phosphate)lysine (Lys223). The active site involves Cys389. Residues Gln608–Val758 enclose the MOSC domain.

It belongs to the class-V pyridoxal-phosphate-dependent aminotransferase family. MOCOS subfamily. Requires pyridoxal 5'-phosphate as cofactor.

It catalyses the reaction Mo-molybdopterin + L-cysteine + AH2 = thio-Mo-molybdopterin + L-alanine + A + H2O. Functionally, sulfurates the molybdenum cofactor. Sulfation of molybdenum is essential for xanthine dehydrogenase (XDH) and aldehyde oxidase (ADO) enzymes in which molybdenum cofactor is liganded by 1 oxygen and 1 sulfur atom in active form. The chain is Molybdenum cofactor sulfurase 2 from Culex quinquefasciatus (Southern house mosquito).